The sequence spans 724 residues: Actin-related protein 5 (724 aa).

Disordered stretches follow at residues 358 to 391 (QSLR…LMNV), 412 to 450 (TTAE…ESYL), and 467 to 488 (KKRL…IGRG). Residues 414-446 (AEGRLRARQKRNEEELEKEKRNQLEEERRRENP) are compositionally biased toward basic and acidic residues. S542 carries the phosphoserine modification.

The protein belongs to the actin family. ARP5 subfamily. As to quaternary structure, component of the INO80 chromatin-remodeling complex. Interacts with EEN. As to expression, expressed ubiquitously in seedlings, roots, leaves, buds, flowers and siliques.

It localises to the nucleus. It is found in the nucleoplasm. The protein resides in the cytoplasm. In terms of biological role, probable subunit of a chromatin-remodeling complex. Involved in DNA repair. Required for multicellular development of all organs. The sequence is that of Actin-related protein 5 from Arabidopsis thaliana (Mouse-ear cress).